Reading from the N-terminus, the 228-residue chain is Small ribosomal subunit protein uS3 (228 aa).

The region spanning 39-107 is the KH type-2 domain; sequence VREYLQDKLK…PVHINIEEIR (69 aa).

This sequence belongs to the universal ribosomal protein uS3 family. Part of the 30S ribosomal subunit. Forms a tight complex with proteins S10 and S14.

Binds the lower part of the 30S subunit head. Binds mRNA in the 70S ribosome, positioning it for translation. This chain is Small ribosomal subunit protein uS3, found in Stutzerimonas stutzeri (strain A1501) (Pseudomonas stutzeri).